Consider the following 1486-residue polypeptide: Chromosome partition protein MukB (1486 aa).

Residue 34 to 41 (GGNGAGKS) participates in ATP binding. Coiled coils occupy residues 326-418 (LEAD…QYNQ), 444-480 (LETFQAKELEATEKMLSLEQKMSMAQTAHSQFEQAYQ), and 509-603 (RHLA…RAPV). Residues 666 to 783 (PGGSEDQRLN…EVPLFGRAAR (118 aa)) form a flexible hinge region. 3 coiled-coil regions span residues 835–923 (EAEI…AKLE), 977–1115 (EMLS…TAKA), and 1209–1266 (VEAI…QNVS).

This sequence belongs to the SMC family. MukB subfamily. As to quaternary structure, homodimerization via its hinge domain. Binds to DNA via its C-terminal region. Interacts, and probably forms a ternary complex, with MukE and MukF via its C-terminal region. The complex formation is stimulated by calcium or magnesium. Interacts with tubulin-related protein FtsZ.

The protein resides in the cytoplasm. It is found in the nucleoid. In terms of biological role, plays a central role in chromosome condensation, segregation and cell cycle progression. Functions as a homodimer, which is essential for chromosome partition. Involved in negative DNA supercoiling in vivo, and by this means organize and compact chromosomes. May achieve or facilitate chromosome segregation by condensation DNA from both sides of a centrally located replisome during cell division. The protein is Chromosome partition protein MukB of Shigella boydii serotype 18 (strain CDC 3083-94 / BS512).